A 143-amino-acid chain; its full sequence is Transcriptional regulator MraZ (143 aa).

SpoVT-AbrB domains follow at residues glutamate 5–glutamate 47 and alanine 76–leucine 119.

Belongs to the MraZ family. In terms of assembly, forms oligomers.

It localises to the cytoplasm. The protein localises to the nucleoid. This Shouchella clausii (strain KSM-K16) (Alkalihalobacillus clausii) protein is Transcriptional regulator MraZ.